We begin with the raw amino-acid sequence, 484 residues long: PTS system N-acetylmuramic acid-specific EIIBC component (484 aa).

The PTS EIIB type-1 domain occupies 1 to 89; sequence MAKITTSMIQ…NEMMEGEEDN (89 aa). The active-site Phosphocysteine intermediate; for EIIB activity is cysteine 28. Positions 83–106 are disordered; that stretch reads MEGEEDNSASTTAESRDLKDVASE. A compositionally biased stretch (basic and acidic residues) spans 96 to 106; it reads ESRDLKDVASE. The PTS EIIC type-1 domain occupies 124–484; the sequence is SKFATIFTPL…FFGTKNVDLS (361 aa). 10 consecutive transmembrane segments (helical) span residues 126–146, 168–188, 194–214, 232–252, 273–293, 312–332, 345–365, 379–399, 404–424, and 451–471; these read FATI…LLGF, LILY…ILIG, AFGG…LGYN, GIDP…GAGV, TLLI…GVLF, ILAG…FVPV, LFPI…ALYA, GSII…VTLP, FITA…VSYM, and IFAG…AGFL.

Its subcellular location is the cell inner membrane. It catalyses the reaction N-acetyl-beta-D-muramate(out) + N(pros)-phospho-L-histidyl-[protein] = N-acetyl-beta-D-muramate 6-phosphate(in) + L-histidyl-[protein]. In terms of biological role, the phosphoenolpyruvate-dependent sugar phosphotransferase system (sugar PTS), a major carbohydrate active transport system, catalyzes the phosphorylation of incoming sugar substrates concomitantly with their translocation across the cell membrane. This system is involved in N-acetylmuramic acid (MurNAc) transport, yielding cytoplasmic MurNAc-6-P. Is also able to take up anhydro-N-acetylmuramic acid (anhMurNAc), but cannot phosphorylate the carbon 6, probably because of the 1,6-anhydro ring. The sequence is that of PTS system N-acetylmuramic acid-specific EIIBC component (murP) from Aliivibrio fischeri (strain ATCC 700601 / ES114) (Vibrio fischeri).